Consider the following 136-residue polypeptide: NADPH-dependent 7-cyano-7-deazaguanine reductase (136 aa).

Catalysis depends on cysteine 50, which acts as the Thioimide intermediate. The Proton donor role is filled by aspartate 57. Residues 72 to 74 (YEL) and 91 to 92 (HE) each bind substrate.

Belongs to the GTP cyclohydrolase I family. QueF type 1 subfamily.

It is found in the cytoplasm. The enzyme catalyses 7-aminomethyl-7-carbaguanine + 2 NADP(+) = 7-cyano-7-deazaguanine + 2 NADPH + 3 H(+). Its pathway is tRNA modification; tRNA-queuosine biosynthesis. Functionally, catalyzes the NADPH-dependent reduction of 7-cyano-7-deazaguanine (preQ0) to 7-aminomethyl-7-deazaguanine (preQ1). The sequence is that of NADPH-dependent 7-cyano-7-deazaguanine reductase from Prochlorococcus marinus (strain MIT 9515).